Here is a 175-residue protein sequence, read N- to C-terminus: ATP synthase subunit d, mitochondrial (175 aa).

Ser-2 is modified (N-acetylserine).

Belongs to the ATPase d subunit family.

Its subcellular location is the mitochondrion inner membrane. Mitochondrial membrane ATP synthase (F(1)F(0) ATP synthase or Complex V) produces ATP from ADP in the presence of a proton gradient across the membrane which is generated by electron transport complexes of the respiratory chain. F-type ATPases consist of two structural domains, F(1) - containing the extramembraneous catalytic core, and F(0) - containing the membrane proton channel, linked together by a central stalk and a peripheral stalk. During catalysis, ATP synthesis in the catalytic domain of F(1) is coupled via a rotary mechanism of the central stalk subunits to proton translocation. Part of the complex F(0) domain and the peripheric stalk, which acts as a stator to hold the catalytic alpha(3)beta(3) subcomplex and subunit a/ATP6 static relative to the rotary elements. The polypeptide is ATP synthase subunit d, mitochondrial (atp7) (Schizosaccharomyces pombe (strain 972 / ATCC 24843) (Fission yeast)).